The following is a 334-amino-acid chain: UL-16 binding protein 5 (334 aa).

A signal peptide spans 1 to 25 (MAAAASPAFLLRLPLLLLLSSWCRT). Topologically, residues 26–223 (GLADPHSLCY…TMSSGTAQPR (198 aa)) are extracellular. The MHC class I alpha-1 like stretch occupies residues 29-117 (DPHSLCYDIT…IQLENYIPKE (89 aa)). Cysteine 50 and cysteine 66 are disulfide-bonded. N-linked (GlcNAc...) asparagine glycosylation occurs at asparagine 82. An MHC class I alpha-2 like region spans residues 118 to 210 (PLTLQARMSC…MDSTLEPSAG (93 aa)). A disulfide bridge connects residues cysteine 127 and cysteine 190. The GPI-anchor amidated glycine moiety is linked to residue glycine 218. Residues 219 to 334 (TAQPRATATT…YSEPLQVSIS (116 aa)) constitute a propeptide, removed in mature form. The chain crosses the membrane as a helical span at residues 224-243 (ATATTLILCCLLIMCLLICS). Residues 244–334 (RHSLTQSHGH…YSEPLQVSIS (91 aa)) are Cytoplasmic-facing.

It belongs to the MHC class I family. In terms of assembly, interacts with KLRK1/NKG2D. As to quaternary structure, (Microbial infection) In CMV-infected cells, interacts with the viral glycoprotein UL16; this interaction causes RAET1G retention in the endoplasmic reticulum and cis-Golgi and prevents binding to and activation of KLRK1/NKG2D, providing CMV with an immune evasion mechanism. The functional form is cleaved C-terminally of the GPI-anchor and yields a 28 kDa protein. In terms of tissue distribution, isoform 1 is highly expressed in colon and in a number of tumor cell lines and highly restricted in normal tissues. Both isoforms are frequently expressed in cell lines derived from epithelial cancers, and in primary breast cancers.

Its subcellular location is the cell membrane. The protein resides in the endoplasmic reticulum. It is found in the secreted. Binds and activates the KLRK1/NKG2D receptor, mediating natural killer cell cytotoxicity. In terms of biological role, down-regulates the expression of KLRK1 and stimulates natural killer cells to secrete IFNG. Functionally, stimulates natural killer cells to secrete IFNG. The polypeptide is UL-16 binding protein 5 (Homo sapiens (Human)).